The sequence spans 437 residues: GTPase Obg (437 aa).

One can recognise an Obg domain in the interval 2–160; the sequence is SMFLDTAKIS…RQLELELKIL (159 aa). Residues 161 to 338 enclose the OBG-type G domain; it reads ADVGLVGFPS…LLEATAELLA (178 aa). Residues 167–174, 192–196, 214–217, 284–287, and 319–321 each bind GTP; these read GFPSVGKS, FTTIV, DLPG, NKMD, and SSL. 2 residues coordinate Mg(2+): Ser174 and Thr194. The region spanning 359 to 437 is the OCT domain; sequence GFAEAEKDFE…IGKFEFEFVD (79 aa).

It belongs to the TRAFAC class OBG-HflX-like GTPase superfamily. OBG GTPase family. Monomer. The cofactor is Mg(2+).

It is found in the cytoplasm. In terms of biological role, an essential GTPase which binds GTP, GDP and possibly (p)ppGpp with moderate affinity, with high nucleotide exchange rates and a fairly low GTP hydrolysis rate. Plays a role in control of the cell cycle, stress response, ribosome biogenesis and in those bacteria that undergo differentiation, in morphogenesis control. This Streptococcus pyogenes serotype M18 (strain MGAS8232) protein is GTPase Obg.